We begin with the raw amino-acid sequence, 98 residues long: Sarcosine oxidase subunit delta (98 aa).

C6, C9, H59, and C63 together coordinate Zn(2+).

It belongs to the SoxD family. As to quaternary structure, heterotetramer composed of subunits alpha (SoxA), beta (SoxB), gamma (SoxG) and delta (SoxD).

Its subcellular location is the cytoplasm. The enzyme catalyses sarcosine + (6S)-5,6,7,8-tetrahydrofolate + O2 = (6R)-5,10-methylene-5,6,7,8-tetrahydrofolate + glycine + H2O2. The catalysed reaction is sarcosine + O2 + H2O = formaldehyde + glycine + H2O2. In the presence of tetrahydrofolate, catalyzes the oxidative demethylation of sarcosine to yield glycine, 5,10-methylenetetrahydrofolate and hydrogen peroxide. In the absence of tetrahydrofolate, catalyzes the oxidative demethylation of sarcosine to yield glycine, formaldehyde and hydrogen peroxide. The chain is Sarcosine oxidase subunit delta from Corynebacterium sp. (strain P-1).